The following is a 986-amino-acid chain: DNA polymerase (986 aa).

2 disordered regions span residues 804–824 (DNPG…SPKR) and 944–969 (RKRD…SEND). Acidic residues predominate over residues 948–968 (DDDDNNDDDDDDGCDSSDSEN).

It belongs to the DNA polymerase type-B family.

The enzyme catalyses DNA(n) + a 2'-deoxyribonucleoside 5'-triphosphate = DNA(n+1) + diphosphate. Functionally, replicates the viral genome, host DNA polymerases cannot substitute for the viral enzyme in this process. This chain is DNA polymerase (POL), found in Bombyx mori (Silk moth).